The sequence spans 179 residues: MSRIGKLPVDIPEKVDVSVNDNLVTVKGPKGELTKEFNNKKVTVEVKDGQVLVRRVHDKDKDARAFQGLTRSLIDSMVEGVTNGFEKKLEMVGVGYNAKKKGKDLELEVGYSHPVIIEAEDGIEFDVEKNNKIVVRGIDKQQVGEMAAKVRAVRKPEPYKGKGIRYEGEHIRRKEGKTG.

Belongs to the universal ribosomal protein uL6 family. As to quaternary structure, part of the 50S ribosomal subunit.

Functionally, this protein binds to the 23S rRNA, and is important in its secondary structure. It is located near the subunit interface in the base of the L7/L12 stalk, and near the tRNA binding site of the peptidyltransferase center. This chain is Large ribosomal subunit protein uL6, found in Halothermothrix orenii (strain H 168 / OCM 544 / DSM 9562).